Consider the following 333-residue polypeptide: DNA repair and recombination protein RadA (333 aa).

An ATP-binding site is contributed by 127–134 (GEFGSGKT).

Belongs to the eukaryotic RecA-like protein family.

Involved in DNA repair and in homologous recombination. Binds and assemble on single-stranded DNA to form a nucleoprotein filament. Hydrolyzes ATP in a ssDNA-dependent manner and promotes DNA strand exchange between homologous DNA molecules. The protein is DNA repair and recombination protein RadA of Pyrobaculum arsenaticum (strain DSM 13514 / JCM 11321 / PZ6).